Here is a 100-residue protein sequence, read N- to C-terminus: Probable DNA-binding protein HU (100 aa).

This sequence belongs to the bacterial histone-like protein family.

In terms of biological role, histone-like DNA-binding protein which is capable of wrapping DNA to stabilize it, and thus to prevent its denaturation under extreme environmental conditions. The polypeptide is Probable DNA-binding protein HU (hup) (Chlamydia pneumoniae (Chlamydophila pneumoniae)).